The following is a 214-amino-acid chain: External core antigen (214 aa).

Positions 1-19 are cleaved as a signal peptide; sequence MQLFHLCLIISCTCPTLQA. The segment at 25–27 is HBEAG; that stretch reads GWL. The segment at 164-214 is disordered; sequence PNAPILSTLPETTVVRRRDRGRSPRRRTPSPRRRRSQSPRRRRSQSRESQC. Over residues 178-207 the composition is skewed to basic residues; that stretch reads VRRRDRGRSPRRRTPSPRRRRSQSPRRRRS. Residues 186 to 192 form a 1; half-length repeat; the sequence is SPRRRTP. The 3 X 8 AA repeats of S-P-R-R-R-R-S-Q stretch occupies residues 186 to 208; it reads SPRRRTPSPRRRRSQSPRRRRSQ. Residues 186 to 214 constitute a propeptide that is removed on maturation; sequence SPRRRTPSPRRRRSQSPRRRRSQSRESQC. Tandem repeats lie at residues 193–200 and 201–208.

This sequence belongs to the orthohepadnavirus precore antigen family. In terms of assembly, homodimerizes. In terms of processing, phosphorylated. Post-translationally, cleaved by host furin.

Its subcellular location is the secreted. It localises to the host nucleus. In terms of biological role, may regulate immune response to the intracellular capsid in acting as a T-cell tolerogen, by having an immunoregulatory effect which prevents destruction of infected cells by cytotoxic T-cells. This immune regulation may predispose to chronicity during perinatal infections and prevent severe liver injury during adult infections. This is External core antigen from Homo sapiens (Human).